A 294-amino-acid chain; its full sequence is 4-hydroxy-tetrahydrodipicolinate synthase (294 aa).

Position 47 (T47) interacts with pyruvate. Y135 functions as the Proton donor/acceptor in the catalytic mechanism. The active-site Schiff-base intermediate with substrate is the K163. Position 205 (T205) interacts with pyruvate.

This sequence belongs to the DapA family. As to quaternary structure, homotetramer; dimer of dimers.

The protein resides in the cytoplasm. The enzyme catalyses L-aspartate 4-semialdehyde + pyruvate = (2S,4S)-4-hydroxy-2,3,4,5-tetrahydrodipicolinate + H2O + H(+). It functions in the pathway amino-acid biosynthesis; L-lysine biosynthesis via DAP pathway; (S)-tetrahydrodipicolinate from L-aspartate: step 3/4. Its function is as follows. Catalyzes the condensation of (S)-aspartate-beta-semialdehyde [(S)-ASA] and pyruvate to 4-hydroxy-tetrahydrodipicolinate (HTPA). The protein is 4-hydroxy-tetrahydrodipicolinate synthase of Rickettsia akari (strain Hartford).